Reading from the N-terminus, the 133-residue chain is UPF0344 protein SE_0666 (133 aa).

Transmembrane regions (helical) follow at residues 1 to 21, 42 to 62, 71 to 91, and 103 to 123; these read MLHV…ATYL, LFML…FMAA, MLLT…EISI, and FFWI…ILPW.

Belongs to the UPF0344 family.

The protein resides in the cell membrane. This is UPF0344 protein SE_0666 from Staphylococcus epidermidis (strain ATCC 12228 / FDA PCI 1200).